The following is a 349-amino-acid chain: Palmitoyltransferase PFA5 (349 aa).

Transmembrane regions (helical) follow at residues 19 to 39 (LIPFLTVLLQCYGVWAFCHQF) and 57 to 77 (LIIVVLSLTFLIWYIWALMLV). In terms of domain architecture, DHHC spans 126–176 (IWCSNCQSLKMSRTHHSTKVGYCVPRFDHYCVWIGTVLGRLNYKLFVQFTF). Cys-156 serves as the catalytic S-palmitoyl cysteine intermediate. A run of 2 helical transmembrane segments spans residues 170–190 (LFVQFTFYLDLVVLILMISIA) and 204–224 (VYAVFALACCALLMAGPLFLT).

The protein belongs to the DHHC palmitoyltransferase family. PFA5 subfamily.

It localises to the membrane. It catalyses the reaction L-cysteinyl-[protein] + hexadecanoyl-CoA = S-hexadecanoyl-L-cysteinyl-[protein] + CoA. In Kluyveromyces lactis (strain ATCC 8585 / CBS 2359 / DSM 70799 / NBRC 1267 / NRRL Y-1140 / WM37) (Yeast), this protein is Palmitoyltransferase PFA5 (PFA5).